We begin with the raw amino-acid sequence, 430 residues long: MSWRWALARRVAALGATSGGGDGATAQAQRLFSSAAALLGRHPPPPSPPHYQIRSKVVGCRGATFVSSRWLHDAQYQVRQDGLSRSEEQQDPFELVADELSLLANRLRSMVAAEVPKLASAAEYFFKVGAEGKRFRPTVLLLMASALKFPLSDSTEVGVLTILANKLRTRQQNIAEITEMIHVASLLHDDVLDDADTRRGVSSLNCIMGNKLSVLAGDFLLSRACVALAALGNTEVVSLMATAVEHLVTGETMQISTSREQRRSMDYYLQKTYYKTASLISNSCKAVAILAGHTADVSMLAYEYGRNLGLAFQLIDDVLDFTGTSASLGKGSLTDIRHGIITAPMLYAMEEFPQLHEVVDRGFDNPANVELALDYLQKSRGIEKTKELAREHANRAIKAIEALPDSDDEDVLTSRRALIDITERVITRTK.

The transit peptide at 1 to 31 directs the protein to the mitochondrion; that stretch reads MSWRWALARRVAALGATSGGGDGATAQAQRL. Residues Lys133, Arg136, and His182 each coordinate isopentenyl diphosphate. Residues Asp189 and Asp193 each contribute to the Mg(2+) site. Arg198 is a binding site for an all-trans-polyprenyl diphosphate. An isopentenyl diphosphate-binding site is contributed by Arg199. An all-trans-polyprenyl diphosphate-binding residues include Lys275, Thr276, Gln313, and Lys330.

The protein belongs to the FPP/GGPP synthase family. In terms of assembly, homodimer. Mg(2+) is required as a cofactor. As to expression, expressed in leaves, stems and roots. Highest expression in roots.

The protein resides in the mitochondrion. The catalysed reaction is 7 isopentenyl diphosphate + (2E)-geranyl diphosphate = all-trans-nonaprenyl diphosphate + 7 diphosphate. It functions in the pathway cofactor biosynthesis; ubiquinone biosynthesis. In terms of biological role, involved in the supply of solanesyl diphosphate for ubiquinone-9 (UQ-9) biosynthesis in mitochondria. Farnesyl diphosphate is the preferred substrate. This is Solanesyl-diphosphate synthase 1, mitochondrial from Oryza sativa subsp. japonica (Rice).